Consider the following 470-residue polypeptide: Glutamate--tRNA ligase (470 aa).

The 'HIGH' region signature appears at 9 to 19 (PSPTGFLHVGG). The 'KMSKS' region motif lies at 236-240 (RLSKR). K239 is a binding site for ATP.

Belongs to the class-I aminoacyl-tRNA synthetase family. Glutamate--tRNA ligase type 1 subfamily. In terms of assembly, monomer.

The protein resides in the cytoplasm. It carries out the reaction tRNA(Glu) + L-glutamate + ATP = L-glutamyl-tRNA(Glu) + AMP + diphosphate. Functionally, catalyzes the attachment of glutamate to tRNA(Glu) in a two-step reaction: glutamate is first activated by ATP to form Glu-AMP and then transferred to the acceptor end of tRNA(Glu). The sequence is that of Glutamate--tRNA ligase from Legionella pneumophila (strain Corby).